The primary structure comprises 354 residues: Dual-specificity RNA methyltransferase RlmN (354 aa).

Glu86 (proton acceptor) is an active-site residue. Positions 105–338 (RHARYTICVS…CTIRQSKGLD (234 aa)) constitute a Radical SAM core domain. Cys112 and Cys343 are oxidised to a cystine. Residues Cys119, Cys123, and Cys126 each contribute to the [4Fe-4S] cluster site. S-adenosyl-L-methionine is bound by residues 169 to 170 (GE), Ser201, 224 to 226 (SLH), and Asn300. The active-site S-methylcysteine intermediate is Cys343.

This sequence belongs to the radical SAM superfamily. RlmN family. The cofactor is [4Fe-4S] cluster.

It is found in the cytoplasm. The catalysed reaction is adenosine(2503) in 23S rRNA + 2 reduced [2Fe-2S]-[ferredoxin] + 2 S-adenosyl-L-methionine = 2-methyladenosine(2503) in 23S rRNA + 5'-deoxyadenosine + L-methionine + 2 oxidized [2Fe-2S]-[ferredoxin] + S-adenosyl-L-homocysteine. The enzyme catalyses adenosine(37) in tRNA + 2 reduced [2Fe-2S]-[ferredoxin] + 2 S-adenosyl-L-methionine = 2-methyladenosine(37) in tRNA + 5'-deoxyadenosine + L-methionine + 2 oxidized [2Fe-2S]-[ferredoxin] + S-adenosyl-L-homocysteine. Its function is as follows. Specifically methylates position 2 of adenine 2503 in 23S rRNA and position 2 of adenine 37 in tRNAs. m2A2503 modification seems to play a crucial role in the proofreading step occurring at the peptidyl transferase center and thus would serve to optimize ribosomal fidelity. The chain is Dual-specificity RNA methyltransferase RlmN from Campylobacter fetus subsp. fetus (strain 82-40).